Reading from the N-terminus, the 267-residue chain is Large ribosomal subunit protein uL4 (267 aa).

Belongs to the universal ribosomal protein uL4 family. As to quaternary structure, part of the 50S ribosomal subunit.

Its function is as follows. One of the primary rRNA binding proteins, this protein initially binds near the 5'-end of the 23S rRNA. It is important during the early stages of 50S assembly. It makes multiple contacts with different domains of the 23S rRNA in the assembled 50S subunit and ribosome. Forms part of the polypeptide exit tunnel. The polypeptide is Large ribosomal subunit protein uL4 (Saccharolobus islandicus (strain Y.N.15.51 / Yellowstone #2) (Sulfolobus islandicus)).